A 384-amino-acid polypeptide reads, in one-letter code: ATP phosphoribosyltransferase regulatory subunit (384 aa).

It belongs to the class-II aminoacyl-tRNA synthetase family. HisZ subfamily. As to quaternary structure, heteromultimer composed of HisG and HisZ subunits.

Its subcellular location is the cytoplasm. The protein operates within amino-acid biosynthesis; L-histidine biosynthesis; L-histidine from 5-phospho-alpha-D-ribose 1-diphosphate: step 1/9. Functionally, required for the first step of histidine biosynthesis. May allow the feedback regulation of ATP phosphoribosyltransferase activity by histidine. The chain is ATP phosphoribosyltransferase regulatory subunit from Azoarcus sp. (strain BH72).